The sequence spans 983 residues: Ephrin type-A receptor 3 (983 aa).

The N-terminal stretch at 1–20 (MDCHLSILVLLGCCVLSCSG) is a signal peptide. Residues 21–540 (ELSPQPSNEV…SFSISGENSH (520 aa)) lie on the Extracellular side of the membrane. Residues 29–206 (EVNLLDSKTI…YFKKCPFTVK (178 aa)) enclose the Eph LBD domain. N-linked (GlcNAc...) asparagine glycosylation is found at N231, N336, N390, N403, and N492. Fibronectin type-III domains follow at residues 324 to 434 (PPSA…TNQA) and 435 to 530 (APSP…TSPD). The chain crosses the membrane as a helical span at residues 541–564 (VVMIAISAAVAIIVLTVVTYVLVG). The Cytoplasmic portion of the chain corresponds to 565–983 (RFCGYHKSKH…TQSKNGPVPV (419 aa)). A phosphotyrosine; by autocatalysis mark is found at Y596 and Y602. Positions 621–882 (ISIDKVVGAG…QIVSILDKLI (262 aa)) constitute a Protein kinase domain. Residues 628–633 (GAGEFG), K653, and 700–706 (EYMENGS) each bind ATP. Y701 bears the Phosphotyrosine; by autocatalysis mark. Residue D746 is the Proton acceptor of the active site. 750–751 (RN) lines the ATP pocket. Residue Y779 is modified to Phosphotyrosine; by autocatalysis. Residues 911–975 (ATFHTTGDWL…ISTIKALETQ (65 aa)) enclose the SAM domain. At Y937 the chain carries Phosphotyrosine. The PDZ-binding signature appears at 981–983 (VPV).

The protein belongs to the protein kinase superfamily. Tyr protein kinase family. Ephrin receptor subfamily. In terms of assembly, heterotetramer upon binding of the ligand. The heterotetramer is composed of an ephrin dimer and a receptor dimer. Oligomerization is probably required to induce biological responses. Forms a ternary EFNA5-EPHA3-ADAM10 complex mediating EFNA5 extracellular domain shedding by ADAM10 which regulates the EFNA5-EPHA3 complex internalization and function. Interacts (phosphorylated) with PTPN1; dephosphorylates EPHA3 and may regulate its trafficking and function. Interacts (phosphorylated) with CRK; mediates EFNA5-EPHA3 signaling through RHOA GTPase activation. Interacts with NCK1 (via SH2 domain); mediates EFNA5-EPHA3 signaling. Post-translationally, autophosphorylates upon activation by EFNA5. Phosphorylation on Tyr-602 mediates interaction with NCK1. Dephosphorylated by PTPN1. In terms of tissue distribution, greatest levels of expression occurring in the brain, also detected in testis. Expressed in myogenic progenitor cells.

The protein localises to the cell membrane. The protein resides in the secreted. It catalyses the reaction L-tyrosyl-[protein] + ATP = O-phospho-L-tyrosyl-[protein] + ADP + H(+). Receptor tyrosine kinase which binds promiscuously membrane-bound ephrin family ligands residing on adjacent cells, leading to contact-dependent bidirectional signaling into neighboring cells. The signaling pathway downstream of the receptor is referred to as forward signaling while the signaling pathway downstream of the ephrin ligand is referred to as reverse signaling. Highly promiscuous for ephrin-A ligands it binds preferentially EFNA5. Upon activation by EFNA5 regulates cell-cell adhesion, cytoskeletal organization and cell migration. Plays a role in cardiac cells migration and differentiation and regulates the formation of the atrioventricular canal and septum during development probably through activation by EFNA1. Involved in the retinotectal mapping of neurons. May also control the segregation but not the guidance of motor and sensory axons during neuromuscular circuit development. This is Ephrin type-A receptor 3 (Epha3) from Mus musculus (Mouse).